A 335-amino-acid chain; its full sequence is MKSTSKIYTDKDSNLDVIKGKRIAVLGYGSQGRAWAQNLRDSGLNVVVGLEREGKSWELAKSDGIIPLHTKDAVKDADIIIFLVPDMVQRTLWLESVQPYMKKGADLVFAHGFNIHYKLIEPPKDSDVYMIAPKGPGPTVREYYKAGGGVPALVAIQQDVSGTALRKALAIAKGIGATRAGVIPTTFKEETETDLFGEQVILVGGIMELMKAAFETLVEEGYQPEVAYFETINELKMLVDLVYEKGITGMLKAVSDTAKYGGMTVGKFVINEDVRKRMKEALQRIKSGKFAEEWVEEYGRGMPTVVNGLSQVQNSLEEKIGNQLKDLIQKGKPKS.

In terms of domain architecture, KARI N-terminal Rossmann spans 5–185; sequence SKIYTDKDSN…GATRAGVIPT (181 aa). Residues 28-31, Ser56, and 86-89 each bind NADP(+); these read YGSQ and DMVQ. His111 is an active-site residue. NADP(+) is bound at residue Gly137. The 146-residue stretch at 186-331 folds into the KARI C-terminal knotted domain; the sequence is TFKEETETDL…NQLKDLIQKG (146 aa). Positions 194, 198, 230, and 234 each coordinate Mg(2+). Residue Ser255 coordinates substrate.

It belongs to the ketol-acid reductoisomerase family. Mg(2+) serves as cofactor.

The enzyme catalyses (2R)-2,3-dihydroxy-3-methylbutanoate + NADP(+) = (2S)-2-acetolactate + NADPH + H(+). It catalyses the reaction (2R,3R)-2,3-dihydroxy-3-methylpentanoate + NADP(+) = (S)-2-ethyl-2-hydroxy-3-oxobutanoate + NADPH + H(+). Its pathway is amino-acid biosynthesis; L-isoleucine biosynthesis; L-isoleucine from 2-oxobutanoate: step 2/4. It participates in amino-acid biosynthesis; L-valine biosynthesis; L-valine from pyruvate: step 2/4. Functionally, involved in the biosynthesis of branched-chain amino acids (BCAA). Catalyzes an alkyl-migration followed by a ketol-acid reduction of (S)-2-acetolactate (S2AL) to yield (R)-2,3-dihydroxy-isovalerate. In the isomerase reaction, S2AL is rearranged via a Mg-dependent methyl migration to produce 3-hydroxy-3-methyl-2-ketobutyrate (HMKB). In the reductase reaction, this 2-ketoacid undergoes a metal-dependent reduction by NADPH to yield (R)-2,3-dihydroxy-isovalerate. In Saccharolobus islandicus (strain L.S.2.15 / Lassen #1) (Sulfolobus islandicus), this protein is Ketol-acid reductoisomerase (NADP(+)).